The primary structure comprises 106 residues: Large ribosomal subunit protein bL21 (106 aa).

It belongs to the bacterial ribosomal protein bL21 family. Part of the 50S ribosomal subunit. Contacts protein L20.

Its function is as follows. This protein binds to 23S rRNA in the presence of protein L20. The chain is Large ribosomal subunit protein bL21 from Syntrophobacter fumaroxidans (strain DSM 10017 / MPOB).